The following is a 297-amino-acid chain: Protoheme IX farnesyltransferase (297 aa).

The next 8 helical transmembrane spans lie at 15 to 35 (VVALILFTAVVGMFLAVPAPY), 39 to 59 (GLLVLSASIGISMVAASAAVF), 91 to 111 (VWGVFLGFIGLGILQLFVNII), 112 to 132 (TVVLTFISLIGYTIVYTLYLK), 139 to 159 (IVIGGAAGATPPVLGWTAVSG), 166 to 186 (ACLLFLIVFIWTPPHFWALAI), 220 to 240 (LLLVSLLPYLSGMSGLIYLVI), and 265 to 285 (AWSTFMYSINYLMLLFIALLF).

It belongs to the UbiA prenyltransferase family. Protoheme IX farnesyltransferase subfamily.

Its subcellular location is the cell inner membrane. It catalyses the reaction heme b + (2E,6E)-farnesyl diphosphate + H2O = Fe(II)-heme o + diphosphate. Its pathway is porphyrin-containing compound metabolism; heme O biosynthesis; heme O from protoheme: step 1/1. Its function is as follows. Converts heme B (protoheme IX) to heme O by substitution of the vinyl group on carbon 2 of heme B porphyrin ring with a hydroxyethyl farnesyl side group. The protein is Protoheme IX farnesyltransferase of Vesicomyosocius okutanii subsp. Calyptogena okutanii (strain HA).